We begin with the raw amino-acid sequence, 152 residues long: Transcriptional regulator MraZ (152 aa).

SpoVT-AbrB domains lie at 5–52 and 81–124; these read ATMV…PLPE and ASEC…DEQT.

Belongs to the MraZ family. As to quaternary structure, forms oligomers.

The protein localises to the cytoplasm. Its subcellular location is the nucleoid. Its function is as follows. Negatively regulates its own expression and that of the subsequent genes in the proximal part of the division and cell wall (dcw) gene cluster. Acts by binding directly to DNA. May also regulate the expression of genes outside the dcw cluster. This chain is Transcriptional regulator MraZ, found in Serratia proteamaculans (strain 568).